Consider the following 201-residue polypeptide: UPF0301 protein Smed_0532 (201 aa).

This sequence belongs to the UPF0301 (AlgH) family.

This Sinorhizobium medicae (strain WSM419) (Ensifer medicae) protein is UPF0301 protein Smed_0532.